The sequence spans 256 residues: Hydroxyacylglutathione hydrolase (256 aa).

Histidine 55, histidine 57, aspartate 59, histidine 60, histidine 113, aspartate 130, and histidine 168 together coordinate Zn(2+).

The protein belongs to the metallo-beta-lactamase superfamily. Glyoxalase II family. In terms of assembly, monomer. Zn(2+) serves as cofactor.

It carries out the reaction an S-(2-hydroxyacyl)glutathione + H2O = a 2-hydroxy carboxylate + glutathione + H(+). It functions in the pathway secondary metabolite metabolism; methylglyoxal degradation; (R)-lactate from methylglyoxal: step 2/2. In terms of biological role, thiolesterase that catalyzes the hydrolysis of S-D-lactoyl-glutathione to form glutathione and D-lactic acid. This Alkalilimnicola ehrlichii (strain ATCC BAA-1101 / DSM 17681 / MLHE-1) protein is Hydroxyacylglutathione hydrolase.